A 379-amino-acid polypeptide reads, in one-letter code: Queuine tRNA-ribosyltransferase (379 aa).

The Proton acceptor role is filled by aspartate 91. Substrate-binding positions include 91–95 (DSGGF), aspartate 145, glutamine 189, and glycine 216. Residues 247 to 253 (GVGKPED) form an RNA binding region. The active-site Nucleophile is the aspartate 266. The interval 271-275 (TRNAR) is RNA binding; important for wobble base 34 recognition. Zn(2+)-binding residues include cysteine 304, cysteine 306, cysteine 309, and histidine 335.

It belongs to the queuine tRNA-ribosyltransferase family. Homodimer. Within each dimer, one monomer is responsible for RNA recognition and catalysis, while the other monomer binds to the replacement base PreQ1. Requires Zn(2+) as cofactor.

It carries out the reaction 7-aminomethyl-7-carbaguanine + guanosine(34) in tRNA = 7-aminomethyl-7-carbaguanosine(34) in tRNA + guanine. It participates in tRNA modification; tRNA-queuosine biosynthesis. Functionally, catalyzes the base-exchange of a guanine (G) residue with the queuine precursor 7-aminomethyl-7-deazaguanine (PreQ1) at position 34 (anticodon wobble position) in tRNAs with GU(N) anticodons (tRNA-Asp, -Asn, -His and -Tyr). Catalysis occurs through a double-displacement mechanism. The nucleophile active site attacks the C1' of nucleotide 34 to detach the guanine base from the RNA, forming a covalent enzyme-RNA intermediate. The proton acceptor active site deprotonates the incoming PreQ1, allowing a nucleophilic attack on the C1' of the ribose to form the product. After dissociation, two additional enzymatic reactions on the tRNA convert PreQ1 to queuine (Q), resulting in the hypermodified nucleoside queuosine (7-(((4,5-cis-dihydroxy-2-cyclopenten-1-yl)amino)methyl)-7-deazaguanosine). This chain is Queuine tRNA-ribosyltransferase, found in Vibrio cholerae serotype O1 (strain ATCC 39315 / El Tor Inaba N16961).